The sequence spans 226 residues: Uracil-DNA glycosylase (226 aa).

Residue D64 is the Proton acceptor of the active site.

This sequence belongs to the uracil-DNA glycosylase (UDG) superfamily. UNG family.

It is found in the cytoplasm. It catalyses the reaction Hydrolyzes single-stranded DNA or mismatched double-stranded DNA and polynucleotides, releasing free uracil.. Functionally, excises uracil residues from the DNA which can arise as a result of misincorporation of dUMP residues by DNA polymerase or due to deamination of cytosine. The protein is Uracil-DNA glycosylase of Vibrio cholerae serotype O1 (strain ATCC 39541 / Classical Ogawa 395 / O395).